Consider the following 438-residue polypeptide: Adenylosuccinate synthetase (438 aa).

Residues 13–19 (GDEGKGK) and 41–43 (GHT) each bind GTP. The active-site Proton acceptor is the D14. Mg(2+) is bound by residues D14 and G41. Residues 14–17 (DEGK), 39–42 (NAGH), T130, R144, Q225, T240, and R312 each bind IMP. H42 (proton donor) is an active-site residue. 308–314 (ATTGRQR) lines the substrate pocket. GTP is bound by residues R314, 340–342 (KLD), and 422–424 (STG).

This sequence belongs to the adenylosuccinate synthetase family. As to quaternary structure, homodimer. It depends on Mg(2+) as a cofactor.

It localises to the cytoplasm. It carries out the reaction IMP + L-aspartate + GTP = N(6)-(1,2-dicarboxyethyl)-AMP + GDP + phosphate + 2 H(+). The protein operates within purine metabolism; AMP biosynthesis via de novo pathway; AMP from IMP: step 1/2. Functionally, plays an important role in the de novo pathway of purine nucleotide biosynthesis. Catalyzes the first committed step in the biosynthesis of AMP from IMP. The sequence is that of Adenylosuccinate synthetase from Vesicomyosocius okutanii subsp. Calyptogena okutanii (strain HA).